A 454-amino-acid chain; its full sequence is Bifunctional protein GlmU (454 aa).

The pyrophosphorylase stretch occupies residues Met-1–Pro-228. Residues Leu-10–Gly-13, Lys-24, Gln-76, Gly-81–Thr-82, Tyr-103–Asp-105, Gly-138, Glu-153, Asn-168, and Asn-226 each bind UDP-N-acetyl-alpha-D-glucosamine. Residue Asp-105 coordinates Mg(2+). Asn-226 is a Mg(2+) binding site. A linker region spans residues Trp-229–Gln-249. Positions Gly-250 to Lys-454 are N-acetyltransferase. 2 residues coordinate UDP-N-acetyl-alpha-D-glucosamine: Arg-332 and Lys-350. The active-site Proton acceptor is the His-362. Tyr-365 and Asn-376 together coordinate UDP-N-acetyl-alpha-D-glucosamine. Acetyl-CoA-binding positions include Ala-379, Asn-385–Tyr-386, Ser-404, Ala-422, and Arg-439.

This sequence in the N-terminal section; belongs to the N-acetylglucosamine-1-phosphate uridyltransferase family. It in the C-terminal section; belongs to the transferase hexapeptide repeat family. As to quaternary structure, homotrimer. The cofactor is Mg(2+).

Its subcellular location is the cytoplasm. The enzyme catalyses alpha-D-glucosamine 1-phosphate + acetyl-CoA = N-acetyl-alpha-D-glucosamine 1-phosphate + CoA + H(+). It catalyses the reaction N-acetyl-alpha-D-glucosamine 1-phosphate + UTP + H(+) = UDP-N-acetyl-alpha-D-glucosamine + diphosphate. The protein operates within nucleotide-sugar biosynthesis; UDP-N-acetyl-alpha-D-glucosamine biosynthesis; N-acetyl-alpha-D-glucosamine 1-phosphate from alpha-D-glucosamine 6-phosphate (route II): step 2/2. It functions in the pathway nucleotide-sugar biosynthesis; UDP-N-acetyl-alpha-D-glucosamine biosynthesis; UDP-N-acetyl-alpha-D-glucosamine from N-acetyl-alpha-D-glucosamine 1-phosphate: step 1/1. Its pathway is bacterial outer membrane biogenesis; LPS lipid A biosynthesis. Functionally, catalyzes the last two sequential reactions in the de novo biosynthetic pathway for UDP-N-acetylglucosamine (UDP-GlcNAc). The C-terminal domain catalyzes the transfer of acetyl group from acetyl coenzyme A to glucosamine-1-phosphate (GlcN-1-P) to produce N-acetylglucosamine-1-phosphate (GlcNAc-1-P), which is converted into UDP-GlcNAc by the transfer of uridine 5-monophosphate (from uridine 5-triphosphate), a reaction catalyzed by the N-terminal domain. The chain is Bifunctional protein GlmU from Xanthomonas campestris pv. campestris (strain 8004).